A 497-amino-acid chain; its full sequence is Putative zinc finger and SCAN domain-containing protein 5D (497 aa).

Positions Lys-41 to Lys-123 constitute an SCAN box domain. The interval Pro-148 to Asn-342 is disordered. Residues Val-158 to Asn-167 are compositionally biased toward polar residues. Composition is skewed to basic and acidic residues over residues Pro-216 to Asn-229 and Lys-249 to Ser-259. C2H2-type zinc fingers lie at residues Phe-352–His-374, Phe-380–His-402, Tyr-408–His-430, Tyr-436–His-458, and Tyr-464–His-486.

The protein localises to the nucleus. The protein is Putative zinc finger and SCAN domain-containing protein 5D of Homo sapiens (Human).